Here is a 251-residue protein sequence, read N- to C-terminus: MFKVIICDDERIIREGLKQMVPWEDYHFTTVYTAKDGVEALSLIRQHQPELVITDIRMPRKNGVDLLDDIKDLDCQIIILSSYDDFEYMKAGIQHHVLDYLLKPVDHTQLEHILDILVQRLLERPHSTNDDAAYHTAFQPLLKIDYDDYYVNQILSQIKQHYHKKVTVLDLINPIDVSESYAMRTFKEHVGITIVDYLNRYRILKSLHLLDQHYKHYEIAEKVGFSEYKMFCYHFKKYLHMSPSDYNKQSK.

One can recognise a Response regulatory domain in the interval 3–118 (KVIICDDERI…QLEHILDILV (116 aa)). D55 is modified (4-aspartylphosphate). In terms of domain architecture, HTH araC/xylS-type spans 152 to 249 (NQILSQIKQH…HMSPSDYNKQ (98 aa)). 2 consecutive DNA-binding regions (H-T-H motif) follow at residues 169-190 (LDLINPIDVSESYAMRTFKEHV) and 216-239 (HYEIAEKVGFSEYKMFCYHFKKYL).

In terms of processing, phosphorylated by SERP2405.

It is found in the cytoplasm. In terms of biological role, probable member of the two-component regulatory system SERP2405/SERP2406. This is an uncharacterized protein from Staphylococcus epidermidis (strain ATCC 35984 / DSM 28319 / BCRC 17069 / CCUG 31568 / BM 3577 / RP62A).